A 320-amino-acid chain; its full sequence is Cytochrome f (320 aa).

The N-terminal stretch at 1 to 35 (MQTRNTFFWIKEQMTRSISVSIIVYVITQTSISNA) is a signal peptide. Positions 36, 56, 59, and 60 each coordinate heme. A helical membrane pass occupies residues 286-306 (VQGLLFFFASVILAQIFLVLK).

This sequence belongs to the cytochrome f family. The 4 large subunits of the cytochrome b6-f complex are cytochrome b6, subunit IV (17 kDa polypeptide, petD), cytochrome f and the Rieske protein, while the 4 small subunits are PetG, PetL, PetM and PetN. The complex functions as a dimer. Heme is required as a cofactor.

The protein localises to the plastid. Its subcellular location is the chloroplast thylakoid membrane. Functionally, component of the cytochrome b6-f complex, which mediates electron transfer between photosystem II (PSII) and photosystem I (PSI), cyclic electron flow around PSI, and state transitions. The sequence is that of Cytochrome f from Buxus microphylla (Littleleaf boxwood).